A 101-amino-acid polypeptide reads, in one-letter code: Small ribosomal subunit protein uS14 (101 aa).

The protein belongs to the universal ribosomal protein uS14 family. As to quaternary structure, part of the 30S ribosomal subunit. Contacts proteins S3 and S10.

Binds 16S rRNA, required for the assembly of 30S particles and may also be responsible for determining the conformation of the 16S rRNA at the A site. The protein is Small ribosomal subunit protein uS14 of Janthinobacterium sp. (strain Marseille) (Minibacterium massiliensis).